A 350-amino-acid polypeptide reads, in one-letter code: WUSCHEL-related homeobox 1 (350 aa).

The segment at residues methionine 72 to arginine 136 is a DNA-binding region (homeobox; WUS-type). The segment at threonine 283–glutamate 308 is disordered.

Belongs to the WUS homeobox family.

It is found in the nucleus. In terms of biological role, transcription factor which may be involved in developmental processes. The chain is WUSCHEL-related homeobox 1 (WOX1) from Arabidopsis thaliana (Mouse-ear cress).